A 484-amino-acid polypeptide reads, in one-letter code: Malonate-semialdehyde dehydrogenase 2 (484 aa).

Residues Phe153, Lys177, Glu180, Arg181, Ser230, and Thr252 each contribute to the NAD(+) site. The active-site Nucleophile is the Cys285. Residue Glu385 coordinates NAD(+).

Belongs to the aldehyde dehydrogenase family. IolA subfamily. In terms of assembly, homotetramer.

The enzyme catalyses 3-oxopropanoate + NAD(+) + CoA + H2O = hydrogencarbonate + acetyl-CoA + NADH + H(+). It catalyses the reaction 2-methyl-3-oxopropanoate + NAD(+) + CoA + H2O = propanoyl-CoA + hydrogencarbonate + NADH + H(+). The protein operates within polyol metabolism; myo-inositol degradation into acetyl-CoA; acetyl-CoA from myo-inositol: step 7/7. Catalyzes the oxidation of malonate semialdehyde (MSA) and methylmalonate semialdehyde (MMSA) into acetyl-CoA and propanoyl-CoA, respectively. Is involved in a myo-inositol catabolic pathway. Bicarbonate, and not CO2, is the end-product of the enzymatic reaction. This chain is Malonate-semialdehyde dehydrogenase 2, found in Geobacillus kaustophilus (strain HTA426).